A 430-amino-acid polypeptide reads, in one-letter code: S-adenosylmethionine synthase (430 aa).

Residue His14 coordinates ATP. Asp16 serves as a coordination point for Mg(2+). Glu42 contributes to the K(+) binding site. Residues Glu55 and Gln98 each coordinate L-methionine. Residues 98 to 108 (QSADINRGVER) are flexible loop. Residues 164 to 166 (DAK), 254 to 255 (KF), Asp263, 269 to 270 (RK), Ala286, and Lys290 contribute to the ATP site. Residue Asp263 participates in L-methionine binding. L-methionine is bound at residue Lys294.

Belongs to the AdoMet synthase family. Homotetramer; dimer of dimers. Requires Mg(2+) as cofactor. K(+) is required as a cofactor.

The protein resides in the cytoplasm. The enzyme catalyses L-methionine + ATP + H2O = S-adenosyl-L-methionine + phosphate + diphosphate. The protein operates within amino-acid biosynthesis; S-adenosyl-L-methionine biosynthesis; S-adenosyl-L-methionine from L-methionine: step 1/1. Functionally, catalyzes the formation of S-adenosylmethionine (AdoMet) from methionine and ATP. The overall synthetic reaction is composed of two sequential steps, AdoMet formation and the subsequent tripolyphosphate hydrolysis which occurs prior to release of AdoMet from the enzyme. This is S-adenosylmethionine synthase from Bacteroides fragilis (strain ATCC 25285 / DSM 2151 / CCUG 4856 / JCM 11019 / LMG 10263 / NCTC 9343 / Onslow / VPI 2553 / EN-2).